The chain runs to 263 residues: Peptide methionine sulfoxide reductase A4, chloroplastic (263 aa).

The N-terminal 75 residues, 1-75, are a transit peptide targeting the chloroplast; that stretch reads MPPLLASTSS…GLGGLGGSPR (75 aa).

This sequence belongs to the MsrA Met sulfoxide reductase family. In terms of tissue distribution, expressed in roots, stems, leaves and flowers.

The protein localises to the plastid. The protein resides in the chloroplast. It catalyses the reaction L-methionyl-[protein] + [thioredoxin]-disulfide + H2O = L-methionyl-(S)-S-oxide-[protein] + [thioredoxin]-dithiol. The catalysed reaction is [thioredoxin]-disulfide + L-methionine + H2O = L-methionine (S)-S-oxide + [thioredoxin]-dithiol. In terms of biological role, catalyzes the reduction of methionine sulfoxide (MetSO) to methionine in proteins. Involved in abiotic and salt stress responses. Plays a protective role against oxidative stress by restoring activity to proteins that have been inactivated by methionine oxidation. MSRA family specifically reduces the MetSO S-enantiomer. The polypeptide is Peptide methionine sulfoxide reductase A4, chloroplastic (Oryza sativa subsp. japonica (Rice)).